The primary structure comprises 112 residues: Tyrosine-protein phosphatase 7 (112 aa).

Residues 1-112 (NNVTIIVMIT…SSPESGPIVV (112 aa)) enclose the Tyrosine-protein phosphatase domain. Position 82 (Asp-82) interacts with substrate.

It belongs to the protein-tyrosine phosphatase family.

It catalyses the reaction O-phospho-L-tyrosyl-[protein] + H2O = L-tyrosyl-[protein] + phosphate. The polypeptide is Tyrosine-protein phosphatase 7 (STY-7) (Styela plicata (Wrinkled sea squirt)).